Here is a 423-residue protein sequence, read N- to C-terminus: Enolase (423 aa).

Residue Gln-164 participates in (2R)-2-phosphoglycerate binding. Residue Glu-206 is the Proton donor of the active site. Residues Asp-243, Glu-289, and Asp-316 each contribute to the Mg(2+) site. The (2R)-2-phosphoglycerate site is built by Lys-341, Arg-370, Ser-371, and Lys-392. The Proton acceptor role is filled by Lys-341.

This sequence belongs to the enolase family. Mg(2+) serves as cofactor.

The protein resides in the cytoplasm. It is found in the secreted. The protein localises to the cell surface. It carries out the reaction (2R)-2-phosphoglycerate = phosphoenolpyruvate + H2O. It participates in carbohydrate degradation; glycolysis; pyruvate from D-glyceraldehyde 3-phosphate: step 4/5. Its function is as follows. Catalyzes the reversible conversion of 2-phosphoglycerate (2-PG) into phosphoenolpyruvate (PEP). It is essential for the degradation of carbohydrates via glycolysis. In Desulfotalea psychrophila (strain LSv54 / DSM 12343), this protein is Enolase.